Reading from the N-terminus, the 72-residue chain is Translational regulator CsrA (72 aa).

It belongs to the CsrA/RsmA family. Homodimer; the beta-strands of each monomer intercalate to form a hydrophobic core, while the alpha-helices form wings that extend away from the core.

Its subcellular location is the cytoplasm. Functionally, a translational regulator that binds mRNA to regulate translation initiation and/or mRNA stability. Usually binds in the 5'-UTR at or near the Shine-Dalgarno sequence preventing ribosome-binding, thus repressing translation. Its main target seems to be the major flagellin gene, while its function is anatagonized by FliW. This is Translational regulator CsrA from Clostridium botulinum (strain Okra / Type B1).